Reading from the N-terminus, the 1219-residue chain is Polyamine-transporting ATPase 13A3 (1219 aa).

The Cytoplasmic portion of the chain corresponds to 1 to 28 (MDKEERKTINKGQEDEMEIHGYNLCRWK). Residues 29 to 49 (LAMVFVGVICTGGFLLLLLYW) lie within the membrane without spanning it. The Cytoplasmic segment spans residues 50–201 (LPEWRVKATC…IAVKVPSVFK (152 aa)). Residues 202–222 (LLIKEVLNPFYIFQLFSVILW) form a helical membrane-spanning segment. Topologically, residues 223-228 (SVDEYY) are lumenal. Residues 229-249 (YYALAIVIMSVVSIISSLYSI) traverse the membrane as a helical segment. The Cytoplasmic segment spans residues 250–405 (RKQYVMLHDM…KPTDFKLYRD (156 aa)). A helical transmembrane segment spans residues 406-426 (AYLFLLCLVVVAGIGFIYTII). Over 427 to 444 (NSILNEKEVQEIIIKSLD) the chain is Lumenal. The chain crosses the membrane as a helical span at residues 445 to 465 (IITITVPPALPAAMTAGIVYA). Residues 466–936 (QRRLKKVGIF…ALMTSFCVFK (471 aa)) are Cytoplasmic-facing. Asp494 functions as the 4-aspartylphosphate intermediate in the catalytic mechanism. 2 residues coordinate Mg(2+): Asp494 and Thr496. Residues 494–496 (DKT), Phe624, Arg680, and Asp746 contribute to the ATP site. Ser813 is subject to Phosphoserine. Asp879 and Asp883 together coordinate Mg(2+). Position 879 to 883 (879 to 883 (DGAND)) interacts with ATP. The chain crosses the membrane as a helical span at residues 937–957 (FMALYSIIQYFSVTLLYSILS). A topological domain (lumenal) is located at residue Asn958. The chain crosses the membrane as a helical span at residues 959 to 979 (LGDFQFLFIDLAIILVVVFTM). Over 980 to 995 (SLNPAWKELVAQRPPS) the chain is Cytoplasmic. The chain crosses the membrane as a helical span at residues 996–1016 (GLISGALLFSVLSQIVISVGF). Residues 1017-1066 (QSLGFFWVKQYKVCDPNSDVCNTTRSACWNSSHLYNGTELDSCKIQNYEN) are Lumenal-facing. The helical transmembrane segment at 1067–1087 (TTVFFISSFQYLTVAVAFSKG) threads the bilayer. Residues 1088–1098 (KPFRQPCYKNY) are Cytoplasmic-facing. Residues 1099–1119 (FFVISVIILYVFILFIMLHPV) traverse the membrane as a helical segment. Over 1120–1136 (ASVDQVLEIMCVPYQWR) the chain is Lumenal. Residues 1137–1157 (IYMLIIVLINAFVSITVEESV) traverse the membrane as a helical segment. Over 1158-1219 (DRWGKCCLSW…NGSCQIITIA (62 aa)) the chain is Cytoplasmic.

This sequence belongs to the cation transport ATPase (P-type) (TC 3.A.3) family. Type V subfamily. Expression is greatest in liver, followed by kidney, colon, stomach, brain and small intestine. Isoform 1 is highly expressed in the kidney while isoform 2 is highly expressed in the brain.

The protein resides in the recycling endosome membrane. The protein localises to the early endosome membrane. It is found in the late endosome membrane. It carries out the reaction putrescine(out) + ATP + H2O = putrescine(in) + ADP + phosphate + H(+). In terms of biological role, ATP-driven pump involved in endocytosis-dependent polyamine transport. Uses ATP as an energy source to transfer polyamine precursor putrescine from the endosomal compartment to the cytosol. In Mus musculus (Mouse), this protein is Polyamine-transporting ATPase 13A3.